The chain runs to 199 residues: Recombination protein RecR (199 aa).

A C4-type zinc finger spans residues 58–73 (CLNCGNIGTSDICDIC). Residues 81 to 176 (GEICVVEDVA…AVTSLAQGVP (96 aa)) enclose the Toprim domain.

This sequence belongs to the RecR family.

Functionally, may play a role in DNA repair. It seems to be involved in an RecBC-independent recombinational process of DNA repair. It may act with RecF and RecO. In Dinoroseobacter shibae (strain DSM 16493 / NCIMB 14021 / DFL 12), this protein is Recombination protein RecR.